Reading from the N-terminus, the 353-residue chain is 3-isopropylmalate dehydrogenase (353 aa).

75–88 contacts NAD(+); the sequence is GPKWENLPHEHKPE. Residues Arg95, Arg105, Arg133, and Asp219 each coordinate substrate. Positions 219, 243, and 247 each coordinate Mg(2+). 276 to 288 serves as a coordination point for NAD(+); it reads GSAPDIAGKNIAN.

It belongs to the isocitrate and isopropylmalate dehydrogenases family. LeuB type 1 subfamily. As to quaternary structure, homodimer. The cofactor is Mg(2+). Mn(2+) is required as a cofactor.

The protein localises to the cytoplasm. It carries out the reaction (2R,3S)-3-isopropylmalate + NAD(+) = 4-methyl-2-oxopentanoate + CO2 + NADH. The protein operates within amino-acid biosynthesis; L-leucine biosynthesis; L-leucine from 3-methyl-2-oxobutanoate: step 3/4. Its function is as follows. Catalyzes the oxidation of 3-carboxy-2-hydroxy-4-methylpentanoate (3-isopropylmalate) to 3-carboxy-4-methyl-2-oxopentanoate. The product decarboxylates to 4-methyl-2 oxopentanoate. The chain is 3-isopropylmalate dehydrogenase from Chlorobium luteolum (strain DSM 273 / BCRC 81028 / 2530) (Pelodictyon luteolum).